Reading from the N-terminus, the 1379-residue chain is ABC multidrug transporter MDR2 (1379 aa).

Residues 65–85 traverse the membrane as a helical segment; sequence IALIVIGTIAGIGAGIPFPLL. The ABC transmembrane type-1 1 domain maps to 69–367; the sequence is VIGTIAGIGA…MAPFMHIFAS (299 aa). Asn-97 carries N-linked (GlcNAc...) asparagine glycosylation. A run of 5 helical transmembrane segments spans residues 119–139, 193–213, 215–235, 301–321, and 336–356; these read VLQVIYVSILNFVCMYIHTGC, KVGLFIGTISYFVAAYIVAFL, VATIAAMLMSVVPIYFLMAFG, IQFGMLYFVAYASNALAFWQG, and VSVGAVYTVIFVLLDASFVLS. The ABC transporter 1 domain maps to 403 to 682; that stretch reads IELQDVTFNY…DGVYAGMVRL (280 aa). 438 to 445 is a binding site for ATP; the sequence is GTSGSGKS. Asn-552 and Asn-633 each carry an N-linked (GlcNAc...) asparagine glycan. The disordered stretch occupies residues 738–758; sequence YMPEEADSLPTEPENEKEKPK. 4 helical membrane-spanning segments follow: residues 781–801, 820–840, 881–901, and 920–942; these read LGLITSIMIGVSYTGEAVIFG, GMLFGLLFFILAIVKFAAVIV, LLVALVTSDASALSSLTGTTI, and VIAWKIAVVLLATLPVLLASGVL. The region spanning 781-1068 is the ABC transmembrane type-1 2 domain; that stretch reads LGLITSIMIG…MFALVPDISK (288 aa). A glycan (N-linked (GlcNAc...) asparagine) is linked at Asn-989. The next 2 helical transmembrane spans lie at 1008-1028 and 1032-1052; these read FWLSLAYSISTLVYALAYWWG and ILAGMYTQVQFFIVLPALLFS. The ABC transporter 2 domain maps to 1135–1374; it reads VQFRNVHFRY…CESYRANVIH (240 aa). 1170–1177 contacts ATP; the sequence is GPSGSGKS.

The protein belongs to the ABC transporter superfamily. ABCB family. Multidrug resistance exporter (TC 3.A.1.201) subfamily.

It localises to the cell membrane. Functionally, pleiotropic ABC efflux transporter that may be involved in the modulation susceptibility to a wide range of unrelated cytotoxic compounds. In Trichophyton interdigitale (strain MR816), this protein is ABC multidrug transporter MDR2.